The sequence spans 153 residues: Probable Brix domain-containing ribosomal biogenesis protein (153 aa).

One can recognise a Brix domain in the interval 1–153; sequence MQVLTTSRKP…RILKISRSSR (153 aa).

Its function is as follows. Probably involved in the biogenesis of the ribosome. This is Probable Brix domain-containing ribosomal biogenesis protein from Archaeoglobus fulgidus (strain ATCC 49558 / DSM 4304 / JCM 9628 / NBRC 100126 / VC-16).